The following is a 69-amino-acid chain: Putative membrane protein insertion efficiency factor (69 aa).

This sequence belongs to the UPF0161 family.

The protein localises to the cell inner membrane. Could be involved in insertion of integral membrane proteins into the membrane. The polypeptide is Putative membrane protein insertion efficiency factor (Novosphingobium aromaticivorans (strain ATCC 700278 / DSM 12444 / CCUG 56034 / CIP 105152 / NBRC 16084 / F199)).